The primary structure comprises 652 residues: Replication protein E1 (652 aa).

The short motif at 88–90 (KRK) is the Nuclear localization signal element. A phosphoserine; by host mark is found at serine 94, serine 98, and serine 109. The Nuclear export signal signature appears at 108 to 117 (LSPRLDAIRI). The disordered stretch occupies residues 145–185 (SESQVPGDAQHEGGGESVQEAEEERGGGDGEAEATGNQETQ). The segment at 185-351 (QAQEQAADIL…QTVVGHAMQE (167 aa)) is DNA-binding region. The region spanning 450–600 (VEFVPFISAL…CPLNSNGDPV (151 aa)) is the SF3 helicase domain. 476-483 (GPSDTGKS) serves as a coordination point for ATP. Residue lysine 557 forms a Glycyl lysine isopeptide (Lys-Gly) (interchain with G-Cter in SUMO) linkage. Residues 620–652 (EGSDQQEEEEEEDEDGVTSRPFRCVPGEITRPL) form a disordered region. Residues 623 to 635 (DQQEEEEEEDEDG) show a composition bias toward acidic residues.

It belongs to the papillomaviridae E1 protein family. Can form hexamers. Interacts with E2 protein; this interaction increases E1 DNA binding specificity. Interacts with host DNA polymerase subunit POLA2. Interacts with host single stranded DNA-binding protein RPA1. Interacts with host TOP1; this interaction stimulates the enzymatic activity of TOP1. Phosphorylated. Post-translationally, sumoylated.

The protein localises to the host nucleus. The enzyme catalyses Couples ATP hydrolysis with the unwinding of duplex DNA by translocating in the 3'-5' direction.. The catalysed reaction is ATP + H2O = ADP + phosphate + H(+). In terms of biological role, ATP-dependent DNA 3'-5' helicase required for initiation of viral DNA replication. It forms a complex with the viral E2 protein. The E1-E2 complex binds to the replication origin which contains binding sites for both proteins. During the initial step, a dimer of E1 interacts with a dimer of protein E2 leading to a complex that binds the viral origin of replication with high specificity. Then, a second dimer of E1 displaces the E2 dimer in an ATP-dependent manner to form the E1 tetramer. Following this, two E1 monomers are added to each half of the site, which results in the formation of two E1 trimers on the viral ori. Subsequently, two hexamers will be created. The double hexamer acts as a bi-directional helicase machinery and unwinds the viral DNA and then recruits the host DNA polymerase to start replication. This chain is Replication protein E1, found in Human papillomavirus type 61.